A 165-amino-acid polypeptide reads, in one-letter code: MEKTYKLPIVLGTDPENTIRIDKLPPLKGAFAVHIHESETENNAHIKLEYGDTEYCLSLYVFNYPKFLRNETVRVRNYDLWPKWIMFAARLPNGKLHPKSGGKVYREDAVIVGEGNYELENPFISFKYSDGRILNFRIEFYRYLRYKSPKYGPSFRSEYWFIGVD.

This is an uncharacterized protein from Aquifex aeolicus (strain VF5).